Consider the following 97-residue polypeptide: MSDINVEVVYALPDRQYLRTVKLAQGSTVEQAIVASGLLTLRNDIDLQKNKLGVYSRPVKLTDILEEGDRVEIYRPLLADPKEMRRKRAERAKNNAQ.

This sequence belongs to the UPF0125 (RnfH) family.

The protein is UPF0125 protein plu3376 of Photorhabdus laumondii subsp. laumondii (strain DSM 15139 / CIP 105565 / TT01) (Photorhabdus luminescens subsp. laumondii).